We begin with the raw amino-acid sequence, 405 residues long: Secreted aspartic protease 8 (405 aa).

Residues 1 to 23 (MVSIITFTKNVLVTLAFALLAQG) form the signal peptide. The propeptide at 24-75 (LAIPEDIDKRAEKVVSLDFTVTRKPFNATAHGQHHQSQQQQQQQQQQPAQKR) is activation peptide. Positions 52–78 (TAHGQHHQSQQQQQQQQQQPAQKRGTV) are disordered. Over residues 58–70 (HQSQQQQQQQQQQ) the composition is skewed to low complexity. The region spanning 89–392 (YAATITVGSN…DLDGNTISLA (304 aa)) is the Peptidase A1 domain. Aspartate 107 is a catalytic residue. Residue 107-109 (DTG) coordinates pepstatin A. A disulfide bridge connects residues cysteine 122 and cysteine 134. Pepstatin A-binding positions include 160–161 (ED) and 292–296 (DSGTT). Residue aspartate 292 is part of the active site. A disulfide bridge connects residues cysteine 327 and cysteine 358.

Belongs to the peptidase A1 family. As to quaternary structure, monomer.

Its subcellular location is the secreted. It carries out the reaction Preferential cleavage at the carboxyl of hydrophobic amino acids, but fails to cleave 15-Leu-|-Tyr-16, 16-Tyr-|-Leu-17 and 24-Phe-|-Phe-25 of insulin B chain. Activates trypsinogen, and degrades keratin.. Its function is as follows. Secreted aspartic peptidases (SAPs) are a group of ten acidic hydrolases considered as key virulence factors. These enzymes supply the fungus with nutrient amino acids as well as are able to degrade the selected host's proteins involved in the immune defense. Moreover, acts toward human hemoglobin though limited proteolysis to generate a variety of antimicrobial hemocidins, enabling to compete with the other microorganisms of the same physiological niche using the microbicidal peptides generated from the host protein. Plays a key role in defense against host by cleaving histatin-5 (Hst 5), a peptide from human saliva that carries out fungicidal activity. The cleavage rate decreases in an order of SAP2 &gt; SAP9 &gt; SAP3 &gt; SAP7 &gt; SAP4 &gt; SAP1 &gt; SAP8. The hydrolysis of Hst 5 by SAP8 causes production of the DSHAKRHHGY, HHSHRGY and FHEKHHSHRGY peptides. The chain is Secreted aspartic protease 8 from Candida albicans (strain SC5314 / ATCC MYA-2876) (Yeast).